The chain runs to 1063 residues: Structural polyprotein (1063 aa).

The segment at 1 to 131 (MASTTPITME…LGPPTNPFQA (131 aa)) is disordered. Residues 30–69 (GASQSRRPRPPRQRDSSTSGDDSGRDSGGPRRRRGNRGRG) form a human C1QBP/SF2P32-binding region. Ser46 is modified (phosphoserine; by host). The span at 70-87 (QLRDWSRAPPPPEERQES) shows a compositional bias: basic and acidic residues. The segment covering 93–107 (APKPSRAPPQQPQPP) has biased composition (pro residues). A disulfide bridge links Cys153 with Cys197. The functions as E2 signal peptide stretch occupies residues 279 to 300 (GAPQAFLAGLLLAAVAVGTARA). Topologically, residues 301 to 534 (GLQPRADMAA…LWLATANALS (234 aa)) are extracellular. 4 N-linked (GlcNAc...) asparagine; by host glycosylation sites follow: Asn353, Asn371, Asn410, and Asn429. The chain crosses the membrane as a helical span at residues 535–555 (LDHALAAFVLLVPWVLIFMVC). Over 556–582 (RRACRRRGAAAALTAVVLQGYNPPAYG) the chain is Cytoplasmic. The functions as E1 signal peptide stretch occupies residues 563-582 (GAAAALTAVVLQGYNPPAYG). Residues 583–1028 (EEAFTYLCTA…QTWAEWAAAH (446 aa)) are Extracellular-facing. Cystine bridges form between Cys590/Cys595, Cys619/Cys824, Cys641/Cys653, Cys699/Cys712, Cys758/Cys767, Cys807/Cys817, Cys931/Cys934, and Cys950/Cys983. N-linked (GlcNAc...) asparagine; by host glycosylation occurs at Asn658. Asn670 and Ala671 together coordinate Ca(2+). Ca(2+) is bound by residues Asp718 and Thr719. 2 N-linked (GlcNAc...) asparagine; by host glycosylation sites follow: Asn759 and Asn791. Residues Thr1011 and Thr1012 are each glycosylated (O-linked (GalNAc...) threonine; by host). The chain crosses the membrane as a helical span at residues 1029 to 1049 (WWQLTLGAICALLLAGLLACC). At 1050-1063 (AKCLYYLRGAIAPR) the chain is on the extracellular side.

As to quaternary structure, homodimer; further assembles into homooligomer. Interacts with human C1QBP. Interacts (via N-terminus) with protease/methyltransferase p150. Heterodimer with spike glycoprotein E2. In terms of assembly, heterodimer with spike glycoprotein E1. Post-translationally, structural polyprotein: Specific enzymatic cleavages in vivo yield mature proteins. Two signal peptidase-mediated cleavages within the polyprotein produce the structural proteins capsid, E2, and E1. The E2 signal peptide remains attached to the C-terminus of the capsid protein after cleavage by the signal peptidase. Another signal peptide at E2 C-terminus directs E1 to the ER, with a similar mechanism. Contains three N-linked oligosaccharides. In terms of processing, capsid is phosphorylated on Ser-46 by host. This phosphorylation negatively regulates capsid protein RNA-binding activity. Dephosphorylated by human PP1A.

It is found in the virion. It localises to the host cytoplasm. Its subcellular location is the host mitochondrion. The protein resides in the virion membrane. The protein localises to the host Golgi apparatus membrane. Its function is as follows. Capsid protein interacts with genomic RNA and assembles into icosahedric core particles 65-70 nm in diameter. The resulting nucleocapsid eventually associates with the cytoplasmic domain of E2 at the cell membrane, leading to budding and formation of mature virions from host Golgi membranes. Phosphorylation negatively regulates RNA-binding activity, possibly delaying virion assembly during the viral replication phase. Capsid protein dimerizes and becomes disulfide-linked in the virion. Modulates genomic RNA replication. Modulates subgenomic RNA synthesis by interacting with human C1QBP/SF2P32. Induces both perinuclear clustering of mitochondria and the formation of electron-dense intermitochondrial plaques, both hallmarks of rubella virus infected cells. Induces apoptosis when expressed in transfected cells. Functionally, responsible for viral attachment to target host cell, by binding to the cell receptor. Its transport to the plasma membrane depends on interaction with E1 protein. The surface glycoproteins display an irregular helical organization and a pseudo-tetrameric inner nucleocapsid arrangement. Class II viral fusion protein. Fusion activity is inactive as long as E1 is bound to E2 in mature virion. After virus attachment to target cell and clathrin-mediated endocytosis, acidification of the endosome would induce dissociation of E1/E2 heterodimer and concomitant trimerization of the E1 subunits. This E1 homotrimer is fusion active, and promotes release of viral nucleocapsid in cytoplasm after endosome and viral membrane fusion. The cytoplasmic tail of spike glycoprotein E1 modulates virus release. The surface glycoproteins display an irregular helical organization and a pseudo-tetrameric inner nucleocapsid arrangement. In Homo sapiens (Human), this protein is Structural polyprotein.